A 428-amino-acid polypeptide reads, in one-letter code: MTAIIDIHAREILDSRGNPTVEVDVLLEDGSFGRAAVPSGASTGAHEAVELRDGDKARYLGKGVTKAVTAVNSDIAECILGLDAEDQRDIDLAMIELDGTENKSRLGANAILGTSLAVAKAAADARGLPLYSYVGGVSAHVLPVPMMNIINGGEHADNPIDFQEFMIMPVGAPSLAEAVRWGAEVFHTLKKGLHEKGLATAVGDEGGFAPNLASTRDALDFVMASIEKAGFKPGEDMMLALDCAATEFFKNGKYEISGEGLSLSPDAMADYLAALCDAYPIISIEDGMGEDDFEGWAALTAKVGKRVQLVGDDLFVTNPKRLEMGIGKGLANSLLVKVNQIGSLTETLEAVSIAQRNGYTAVMSHRSGETEDATIADLAVATNCGQIKTGSLARSDRLAKYNQLIRIEEELGVSARYAGKTAFGRLGA.

Gln-163 contributes to the (2R)-2-phosphoglycerate binding site. The Proton donor role is filled by Glu-205. Positions 242, 285, and 312 each coordinate Mg(2+). Residues Lys-337, Arg-366, Ser-367, and Lys-388 each contribute to the (2R)-2-phosphoglycerate site. Lys-337 serves as the catalytic Proton acceptor.

This sequence belongs to the enolase family. The cofactor is Mg(2+).

It is found in the cytoplasm. It localises to the secreted. Its subcellular location is the cell surface. It carries out the reaction (2R)-2-phosphoglycerate = phosphoenolpyruvate + H2O. It participates in carbohydrate degradation; glycolysis; pyruvate from D-glyceraldehyde 3-phosphate: step 4/5. Catalyzes the reversible conversion of 2-phosphoglycerate (2-PG) into phosphoenolpyruvate (PEP). It is essential for the degradation of carbohydrates via glycolysis. The sequence is that of Enolase from Novosphingobium aromaticivorans (strain ATCC 700278 / DSM 12444 / CCUG 56034 / CIP 105152 / NBRC 16084 / F199).